The sequence spans 496 residues: Thiamine transporter 2 (496 aa).

The Cytoplasmic segment spans residues 1–7 (MDCYRTS). Residues 8–28 (LSSSWIYPTVILCLFGFFSMM) form a helical membrane-spanning segment. The Extracellular portion of the chain corresponds to 29-53 (RPSEPFLIPYLSGPDKNLTSAEITN). N-linked (GlcNAc...) asparagine glycosylation occurs at asparagine 45. A helical transmembrane segment spans residues 54–74 (EIFPVWTYSYLVLLLPVFVLT). The Cytoplasmic segment spans residues 75-81 (DYVRYKP). Residues 82–102 (VIILQGISFIITWLLLLFGQG) traverse the membrane as a helical segment. Residues 103–110 (VKTMQVVE) are Extracellular-facing. A helical membrane pass occupies residues 111–131 (FFYGMVTAAEVAYYAYIYSVV). Topologically, residues 132–144 (SPEHYQRVSGYCR) are cytoplasmic. Residues 145–165 (SVTLAAYTAGSVLAQLLVSLA) traverse the membrane as a helical segment. Residue asparagine 166 is glycosylated (N-linked (GlcNAc...) asparagine). Residues 166–169 (NMSY) lie on the Extracellular side of the membrane. Residues 170–190 (FYLNVISLASVSVAFLFSLFL) traverse the membrane as a helical segment. At 191 to 282 (PMPKKSMFFH…YSSKRLFYWS (92 aa)) the chain is on the cytoplasmic side. Residues 283 to 303 (LWWAFATAGFNQVLNYVQILW) traverse the membrane as a helical segment. The Extracellular portion of the chain corresponds to 304–316 (DYKAPSQDSSIYN). Residues 317–337 (GAVEAIATFGGAVAAFAVGYV) traverse the membrane as a helical segment. Residues 338-342 (KVNWD) lie on the Cytoplasmic side of the membrane. A helical transmembrane segment spans residues 343 to 363 (LLGELALVVFSVVNAGSLFLM). Over 364–375 (HYTANIWACYAG) the chain is Extracellular. Residues 376–396 (YLIFKSSYMLLITIAVFQIAV) traverse the membrane as a helical segment. Residues 397 to 405 (NLNVERYAL) are Cytoplasmic-facing. Residues 406-426 (VFGINTFIALVIQTIMTVIVV) traverse the membrane as a helical segment. The Extracellular segment spans residues 427 to 434 (DQRGLNLP). The chain crosses the membrane as a helical span at residues 435 to 455 (VSIQFLVYGSYFAVIAGIFLM). At 456–496 (RSMYITYSTKSQKDVQSPAPSENPDVSHPEEESNIIMSTKL) the chain is on the cytoplasmic side. The disordered stretch occupies residues 468–496 (KDVQSPAPSENPDVSHPEEESNIIMSTKL).

This sequence belongs to the reduced folate carrier (RFC) transporter (TC 2.A.48) family. Widely expressed but most abundant in placenta, kidney and liver.

It localises to the membrane. The enzyme catalyses thiamine(out) + H(+)(in) = thiamine(in) + H(+)(out). It catalyses the reaction pyridoxine(out) + n H(+)(out) = pyridoxine(in) + n H(+)(in). With respect to regulation, pyridoxine transport is inhibited by carbonyl cyanide p-trifluoromethoxyphenylhydrazone (FCCP) and carbonyl cyanide m-chlorophenylhydrazone (CCCP). In terms of biological role, mediates high affinity thiamine uptake, probably via a proton anti-port mechanism. Has no folate transport activity. Mediates H(+)-dependent pyridoxine transport. In Homo sapiens (Human), this protein is Thiamine transporter 2 (SLC19A3).